Reading from the N-terminus, the 370-residue chain is N-acetyltaurine hydrolase (370 aa).

Residues His-26, His-28, Glu-189, His-221, His-250, and Asp-318 each contribute to the a divalent metal cation site.

The protein belongs to the metallo-dependent hydrolases superfamily. Phosphotriesterase family. A divalent metal cation is required as a cofactor.

The protein resides in the cytoplasm. Its subcellular location is the cytosol. It catalyses the reaction N-acetyltaurine + H2O = taurine + acetate. Functionally, N-acetyltaurine hydrolase catalyzes the hydrolysis of N-acetyltaurine into taurine and acetate. This is N-acetyltaurine hydrolase (pter) from Dictyostelium discoideum (Social amoeba).